Here is a 472-residue protein sequence, read N- to C-terminus: Lactate utilization protein B (472 aa).

4Fe-4S ferredoxin-type domains follow at residues glycine 304–tyrosine 334 and tyrosine 353–leucine 382. Residues cysteine 313, cysteine 316, cysteine 319, cysteine 323, cysteine 366, cysteine 369, and cysteine 373 each coordinate [4Fe-4S] cluster.

The protein belongs to the LutB/YkgF family.

Functionally, is involved in L-lactate degradation and allows cells to grow with lactate as the sole carbon source. Has probably a role as an electron transporter during oxidation of L-lactate. The sequence is that of Lactate utilization protein B from Anoxybacillus flavithermus (strain DSM 21510 / WK1).